The primary structure comprises 207 residues: Ribosomal RNA small subunit methyltransferase G (207 aa).

Residues G73, L78, 124-125 (VE), and R139 contribute to the S-adenosyl-L-methionine site.

Belongs to the methyltransferase superfamily. RNA methyltransferase RsmG family.

The protein localises to the cytoplasm. It catalyses the reaction guanosine(527) in 16S rRNA + S-adenosyl-L-methionine = N(7)-methylguanosine(527) in 16S rRNA + S-adenosyl-L-homocysteine. Specifically methylates the N7 position of guanine in position 527 of 16S rRNA. The sequence is that of Ribosomal RNA small subunit methyltransferase G from Salmonella schwarzengrund (strain CVM19633).